A 501-amino-acid chain; its full sequence is Phosphatidylinositol 4-kinase type 2-beta (501 aa).

Disordered regions lie at residues 1–30 (MMAE…SSEV) and 65–122 (TELE…NHFP). Polar residues predominate over residues 17-27 (GDSTPETNFLS). A compositionally biased stretch (low complexity) spans 76-88 (ALLLPGPAGSLSP). The span at 99–117 (NMLSSSSDNLASPGNSSGE) shows a compositional bias: polar residues. One can recognise a PI3K/PI4K catalytic domain in the interval 141–471 (GVFPERISQG…VQMPRVVVER (331 aa)). The segment at 147–153 (ISQGSSG) is G-loop. ATP is bound by residues Ser154 and Lys169. The tract at residues 174-176 (EPY) is important for substrate binding. Positions 182–195 (KWTKYFHKVCCPCC) are important for interaction with membranes. ATP-binding positions include 278–281 (QLFV) and 292–293 (RK). The segment at 285–293 (HEADFWLRK) is important for interaction with membranes. The segment at 322–330 (RNTDRGNDN) is catalytic loop. Residues 362 to 382 (AIDNGLAFPFKHPDEWRAYPF) form an activation loop region. ATP is bound at residue Asp364. The important for interaction with membranes stretch occupies residues 377–386 (WRAYPFHWAW).

This sequence belongs to the PI3/PI4-kinase family. Type II PI4K subfamily.

It is found in the cytoplasm. It localises to the cytosol. The protein resides in the golgi apparatus membrane. Its subcellular location is the endoplasmic reticulum membrane. The protein localises to the cell membrane. It is found in the early endosome membrane. It carries out the reaction a 1,2-diacyl-sn-glycero-3-phospho-(1D-myo-inositol) + ATP = a 1,2-diacyl-sn-glycero-3-phospho-(1D-myo-inositol 4-phosphate) + ADP + H(+). Its function is as follows. Contributes to the overall PI4-kinase activity of the cell. This contribution may be especially significant in plasma membrane, endosomal and Golgi compartments. The phosphorylation of phosphatidylinositol (PI) to PI4P is the first committed step in the generation of phosphatidylinositol 4,5-bisphosphate (PIP2), a precursor of the second messenger inositol 1,4,5-trisphosphate (InsP3). In Danio rerio (Zebrafish), this protein is Phosphatidylinositol 4-kinase type 2-beta (pi4k2b).